The sequence spans 152 residues: Protein-export protein SecB (152 aa).

Belongs to the SecB family. Homotetramer, a dimer of dimers. One homotetramer interacts with 1 SecA dimer.

The protein resides in the cytoplasm. One of the proteins required for the normal export of preproteins out of the cell cytoplasm. It is a molecular chaperone that binds to a subset of precursor proteins, maintaining them in a translocation-competent state. It also specifically binds to its receptor SecA. The chain is Protein-export protein SecB from Dechloromonas aromatica (strain RCB).